We begin with the raw amino-acid sequence, 688 residues long: Protein sel-1 homolog 2 (688 aa).

The signal sequence occupies residues 1 to 23; that stretch reads MKPLSLLIEILIILGVTIKTIKA. The Extracellular portion of the chain corresponds to 24–662; sequence EEHNKRQKER…RWNWLKLDNT (639 aa). A glycan (N-linked (GlcNAc...) asparagine) is linked at Asn34. Sel1-like repeat units follow at residues 107–142, 143–178, 179–214, 215–250, 297–333, 334–370, 371–406, 407–442, 443–478, 551–586, and 588–623; these read GDQL…DMGN, LKAM…KEGS, CKAQ…AGGN, MMSQ…DYIA, VQIQ…KAGS, ANAM…SKGN, AIGL…EKGW, PDAQ…QSGQ, PLAI…ELGH, AFAR…NKYH, and AQAM…QTSP. The helical transmembrane segment at 663 to 683 threads the bilayer; the sequence is IGPHWDLFVIGLIVPGLILLL. The Cytoplasmic segment spans residues 684–688; sequence RNHHG.

Belongs to the sel-1 family.

It localises to the membrane. The protein localises to the cell projection. It is found in the cilium. Its subcellular location is the nucleus speckle. The sequence is that of Protein sel-1 homolog 2 (SEL1L2) from Homo sapiens (Human).